Consider the following 345-residue polypeptide: Holliday junction branch migration complex subunit RuvB (345 aa).

The tract at residues 4–182 (PDRIVSAVQR…FGIPIRLEFY (179 aa)) is large ATPase domain (RuvB-L). ATP is bound by residues Arg-22, Gly-63, Lys-66, Thr-67, Thr-68, 129–131 (EDY), Arg-172, Tyr-182, and Arg-219. Mg(2+) is bound at residue Thr-67. The tract at residues 183–253 (TVDELQAIVT…IADAALSRLE (71 aa)) is small ATPAse domain (RuvB-S). Residues 256 to 345 (ALGLDQLDRR…QSQINLFEEE (90 aa)) form a head domain (RuvB-H) region. Residues Arg-292, Arg-311, and Arg-316 each coordinate DNA.

Belongs to the RuvB family. In terms of assembly, homohexamer. Forms an RuvA(8)-RuvB(12)-Holliday junction (HJ) complex. HJ DNA is sandwiched between 2 RuvA tetramers; dsDNA enters through RuvA and exits via RuvB. An RuvB hexamer assembles on each DNA strand where it exits the tetramer. Each RuvB hexamer is contacted by two RuvA subunits (via domain III) on 2 adjacent RuvB subunits; this complex drives branch migration. In the full resolvosome a probable DNA-RuvA(4)-RuvB(12)-RuvC(2) complex forms which resolves the HJ.

Its subcellular location is the cytoplasm. The enzyme catalyses ATP + H2O = ADP + phosphate + H(+). Its function is as follows. The RuvA-RuvB-RuvC complex processes Holliday junction (HJ) DNA during genetic recombination and DNA repair, while the RuvA-RuvB complex plays an important role in the rescue of blocked DNA replication forks via replication fork reversal (RFR). RuvA specifically binds to HJ cruciform DNA, conferring on it an open structure. The RuvB hexamer acts as an ATP-dependent pump, pulling dsDNA into and through the RuvAB complex. RuvB forms 2 homohexamers on either side of HJ DNA bound by 1 or 2 RuvA tetramers; 4 subunits per hexamer contact DNA at a time. Coordinated motions by a converter formed by DNA-disengaged RuvB subunits stimulates ATP hydrolysis and nucleotide exchange. Immobilization of the converter enables RuvB to convert the ATP-contained energy into a lever motion, pulling 2 nucleotides of DNA out of the RuvA tetramer per ATP hydrolyzed, thus driving DNA branch migration. The RuvB motors rotate together with the DNA substrate, which together with the progressing nucleotide cycle form the mechanistic basis for DNA recombination by continuous HJ branch migration. Branch migration allows RuvC to scan DNA until it finds its consensus sequence, where it cleaves and resolves cruciform DNA. This chain is Holliday junction branch migration complex subunit RuvB, found in Chelativorans sp. (strain BNC1).